The chain runs to 338 residues: Ferrochelatase (338 aa).

Fe cation-binding residues include His207 and Glu293.

The protein belongs to the ferrochelatase family.

Its subcellular location is the cytoplasm. It carries out the reaction heme b + 2 H(+) = protoporphyrin IX + Fe(2+). Its pathway is porphyrin-containing compound metabolism; protoheme biosynthesis; protoheme from protoporphyrin-IX: step 1/1. Functionally, catalyzes the ferrous insertion into protoporphyrin IX. The sequence is that of Ferrochelatase from Shewanella denitrificans (strain OS217 / ATCC BAA-1090 / DSM 15013).